The following is a 197-amino-acid chain: Phospholipid hydroperoxide glutathione peroxidase (197 aa).

Phosphoserine is present on S40. The active site involves U73. Residue U73 is a non-standard amino acid, selenocysteine.

The protein belongs to the glutathione peroxidase family. In terms of assembly, monomer. Has a tendency to form higher mass oligomers. Interacts with FUNDC1; this interaction promotes GPX4 recruitment into mitochondria through TOM/TIM complex where it is degraded by mitophagy.

The protein resides in the mitochondrion. It localises to the cytoplasm. The enzyme catalyses a hydroperoxy polyunsaturated fatty acid + 2 glutathione = a hydroxy polyunsaturated fatty acid + glutathione disulfide + H2O. It catalyses the reaction 2 glutathione + H2O2 = glutathione disulfide + 2 H2O. It carries out the reaction tert-butyl hydroperoxide + 2 glutathione = tert-butanol + glutathione disulfide + H2O. The catalysed reaction is cumene hydroperoxide + 2 glutathione = 2-phenylpropan-2-ol + glutathione disulfide + H2O. The enzyme catalyses (9S)-hydroperoxy-(10E,12Z)-octadecadienoate + 2 glutathione = (9S)-hydroxy-(10E,12Z)-octadecadienoate + glutathione disulfide + H2O. It catalyses the reaction (13S)-hydroperoxy-(9Z,11E)-octadecadienoate + 2 glutathione = (13S)-hydroxy-(9Z,11E)-octadecadienoate + glutathione disulfide + H2O. It carries out the reaction (5S)-hydroperoxy-(6E,8Z,11Z,14Z)-eicosatetraenoate + 2 glutathione = (5S)-hydroxy-(6E,8Z,11Z,14Z)-eicosatetraenoate + glutathione disulfide + H2O. The catalysed reaction is (12R)-hydroperoxy-(5Z,8Z,10E,14Z)-eicosatetraenoate + 2 glutathione = (12R)-hydroxy-(5Z,8Z,10E,14Z)-eicosatetraenoate + glutathione disulfide + H2O. The enzyme catalyses (12S)-hydroperoxy-(5Z,8Z,10E,14Z)-eicosatetraenoate + 2 glutathione = (12S)-hydroxy-(5Z,8Z,10E,14Z)-eicosatetraenoate + glutathione disulfide + H2O. It catalyses the reaction (15S)-hydroperoxy-(5Z,8Z,11Z,13E)-eicosatetraenoate + 2 glutathione = (15S)-hydroxy-(5Z,8Z,11Z,13E)-eicosatetraenoate + glutathione disulfide + H2O. It carries out the reaction (5S)-hydroperoxy-(6E,8Z,11Z,14Z,17Z)-eicosapentaenoate + 2 glutathione = (5S)-hydroxy-(6E,8Z,11Z,14Z,17Z)-eicosapentaenoate + glutathione disulfide + H2O. The catalysed reaction is (12S)-hydroperoxy-(5Z,8Z,10E,14Z,17Z)-eicosapentaenoate + 2 glutathione = (12S)-hydroxy-(5Z,8Z,10E,14Z,17Z)-eicosapentaenoate + glutathione disulfide + H2O. The enzyme catalyses (15S)-hydroperoxy-(5Z,8Z,11Z,13E,17Z)-eicosapentaenoate + 2 glutathione = (15S)-hydroxy-(5Z,8Z,11Z,13E,17Z)-eicosapentaenoate + glutathione disulfide + H2O. It catalyses the reaction (15S)-hydroperoxy-(11Z,13E)-eicosadienoate + 2 glutathione = (15S)-hydroxy-(11Z,13E)-eicosadienoate + glutathione disulfide + H2O. It carries out the reaction (17S)-hydroperoxy-(4Z,7Z,10Z,13Z,15E,19Z)-docosahexaenoate + 2 glutathione = (17S)-hydroxy-(4Z,7Z,10Z,13Z,15E,19Z)-docosahexaenoate + glutathione disulfide + H2O. The catalysed reaction is a hydroperoxy-1,2-diacyl-glycero-3-phosphocholine + 2 glutathione = a hydroxy-1,2-diacyl-glycero-3-phosphocholine + glutathione disulfide + H2O. Functionally, essential antioxidant peroxidase that directly reduces phospholipid hydroperoxide even if they are incorporated in membranes and lipoproteins. Can also reduce fatty acid hydroperoxide, cholesterol hydroperoxide and thymine hydroperoxide. Plays a key role in protecting cells from oxidative damage by preventing membrane lipid peroxidation. Required to prevent cells from ferroptosis, a non-apoptotic cell death resulting from an iron-dependent accumulation of lipid reactive oxygen species. The presence of selenocysteine (Sec) versus Cys at the active site is essential for life: it provides resistance to overoxidation and prevents cells against ferroptosis. The presence of Sec at the active site is also essential for the survival of a specific type of parvalbumin-positive interneurons, thereby preventing against fatal epileptic seizures. May be required to protect cells from the toxicity of ingested lipid hydroperoxides. Required for normal sperm development and male fertility. Essential for maturation and survival of photoreceptor cells. Plays a role in a primary T-cell response to viral and parasitic infection by protecting T-cells from ferroptosis and by supporting T-cell expansion. Plays a role of glutathione peroxidase in platelets in the arachidonic acid metabolism. Reduces hydroperoxy ester lipids formed by a 15-lipoxygenase that may play a role as down-regulator of the cellular 15-lipoxygenase pathway. Can also reduce small soluble hydroperoxides such as H2O2, cumene hydroperoxide and tert-butyl hydroperoxide. This Sus scrofa (Pig) protein is Phospholipid hydroperoxide glutathione peroxidase.